Consider the following 302-residue polypeptide: Methionyl-tRNA formyltransferase (302 aa).

Residue Ser-108 to Pro-111 participates in (6S)-5,6,7,8-tetrahydrofolate binding. Residues Arg-276 to Leu-288 show a composition bias toward basic and acidic residues. Positions Arg-276 to Ala-302 are disordered.

The protein belongs to the Fmt family.

It carries out the reaction L-methionyl-tRNA(fMet) + (6R)-10-formyltetrahydrofolate = N-formyl-L-methionyl-tRNA(fMet) + (6S)-5,6,7,8-tetrahydrofolate + H(+). Attaches a formyl group to the free amino group of methionyl-tRNA(fMet). The formyl group appears to play a dual role in the initiator identity of N-formylmethionyl-tRNA by promoting its recognition by IF2 and preventing the misappropriation of this tRNA by the elongation apparatus. This Cereibacter sphaeroides (strain ATCC 17029 / ATH 2.4.9) (Rhodobacter sphaeroides) protein is Methionyl-tRNA formyltransferase.